The primary structure comprises 314 residues: uncharacterized protein (314 aa).

The span at 68-91 shows a compositional bias: basic and acidic residues; it reads EKKKKSSSFEKRDKRRVQLKEKSP. 2 disordered regions span residues 68 to 97 and 141 to 164; these read EKKKKSSSFEKRDKRRVQLKEKSPLRTPRN and MDVQSPSTMSTSKNNVRNAERPAS. The span at 144-157 shows a compositional bias: polar residues; that stretch reads QSPSTMSTSKNNVR.

The protein resides in the mitochondrion. This is an uncharacterized protein from Schizosaccharomyces pombe (strain 972 / ATCC 24843) (Fission yeast).